We begin with the raw amino-acid sequence, 98 residues long: uncharacterized protein (98 aa).

Residues 77 to 98 (SERAGEEVPPLAVAGSDDGHDH) form a disordered region.

It to M.tuberculosis Rv1991c and Rv3269.

This is an uncharacterized protein from Mycobacterium bovis (strain ATCC BAA-935 / AF2122/97).